Reading from the N-terminus, the 211-residue chain is Bifunctional transcriptional activator/DNA repair enzyme AdaA (211 aa).

The active-site Nucleophile; methyl group acceptor from methylphosphotriester is the Cys54. The Zn(2+) site is built by Cys54, Cys58, Cys85, and Cys88. Positions 102–200 (DLITEYIDKN…GQTPARFRQM (99 aa)) constitute an HTH araC/xylS-type domain. The segment at residues 119–140 (ESLADICHGSPYHMHRTFKKIK) is a DNA-binding region (H-T-H motif).

It depends on Zn(2+) as a cofactor.

The enzyme catalyses (2'-deoxyribonucleoside 5'-methylphosphotriester)-DNA + L-cysteinyl-[protein] = 2'-deoxyribonucleotide-DNA + S-methyl-L-cysteinyl-[protein] + H(+). Functionally, is involved in the adaptive response to alkylation damage in DNA caused by alkylating agents. Repairs the methylphosphotriester lesions in DNA by a direct and irreversible transfer of the methyl group to one of its own cysteine residues. Its function is as follows. The methylation of AdaA by methylphosphotriesters in DNA leads to its activation as a transcriptional regulator that activates the transcription of the ada operon which consists of adaA and adaB, and of the adjacent gene alkA. This is Bifunctional transcriptional activator/DNA repair enzyme AdaA (adaA) from Bacillus subtilis (strain 168).